Here is a 436-residue protein sequence, read N- to C-terminus: GTPase Der (436 aa).

EngA-type G domains are found at residues 4–167 (PVVA…KDEE) and 176–351 (IKLS…ENHK). GTP is bound by residues 10-17 (GRPNVGKS), 57-61 (DTGGI), 119-122 (NKVD), 182-189 (GRPNVGKS), 229-233 (DTAGM), and 294-297 (NKWD). One can recognise a KH-like domain in the interval 352-436 (KRVQSSTLNE…PIRIIPRKRN (85 aa)).

It belongs to the TRAFAC class TrmE-Era-EngA-EngB-Septin-like GTPase superfamily. EngA (Der) GTPase family. As to quaternary structure, associates with the 50S ribosomal subunit.

GTPase that plays an essential role in the late steps of ribosome biogenesis. This Staphylococcus carnosus (strain TM300) protein is GTPase Der.